The sequence spans 490 residues: UDP-N-acetylmuramyl-tripeptide synthetase (490 aa).

113-119 (GTDGKTT) contacts ATP. Residues 158-159 (TT), Ser185, and Arg193 contribute to the UDP-N-acetyl-alpha-D-muramoyl-L-alanyl-D-glutamate site. N6-carboxylysine is present on Lys225.

The protein belongs to the MurCDEF family. MurE subfamily. Post-translationally, carboxylation is probably crucial for Mg(2+) binding and, consequently, for the gamma-phosphate positioning of ATP.

It is found in the cytoplasm. It functions in the pathway cell wall biogenesis; peptidoglycan biosynthesis. In terms of biological role, catalyzes the addition of an amino acid to the nucleotide precursor UDP-N-acetylmuramoyl-L-alanyl-D-glutamate (UMAG) in the biosynthesis of bacterial cell-wall peptidoglycan. The polypeptide is UDP-N-acetylmuramyl-tripeptide synthetase (Deinococcus radiodurans (strain ATCC 13939 / DSM 20539 / JCM 16871 / CCUG 27074 / LMG 4051 / NBRC 15346 / NCIMB 9279 / VKM B-1422 / R1)).